A 127-amino-acid polypeptide reads, in one-letter code: Protein chibby homolog 1 (127 aa).

A disordered region spans residues 1 to 25 (MPLFGSIFSPKKTPPRKSASLSNLH). Phosphoserine occurs at positions 9 and 20. Residues 60–112 (VADSVISGGVDRRETQRLRKRNQQLEEENNLLRLKVDILLDMLSETTAESHLK) form a minimal region for the interaction with PKD2 region. Residues 68–110 (GVDRRETQRLRKRNQQLEEENNLLRLKVDILLDMLSETTAESH) adopt a coiled-coil conformation. Residues 77 to 98 (LRKRNQQLEEENNLLRLKVDIL) form a leucine-zipper; mediates homodimerization region.

The protein belongs to the chibby family. Homodimer. Homodimerization is essential for nuclear localization and interaction with KPNA4 but is dispensable for interaction with CTNNB1. Interacts with polycystin-2/PKD2 and GM130. Interacts with the C-terminal region of CTNNB1. Interacts (C-terminus) with TCIM (C-terminus), TCIM competes with CTNNB1 for the interaction with CBY1. Interacts with FAM92A; this interaction facilitates targeting of FAM92A to cilium basal body. Interacts with CIBAR2. Interacts with KPNA4. In terms of tissue distribution, found in heart, brain, lung, liver, muscle, kidney and testis. Levels are approximately 3-fold higher in embryonic and adult heart than in lung or liver.

It localises to the nucleus speckle. The protein resides in the cytoplasm. The protein localises to the cytoskeleton. It is found in the cilium basal body. Its subcellular location is the microtubule organizing center. It localises to the centrosome. The protein resides in the centriole. The protein localises to the golgi apparatus. It is found in the trans-Golgi network. Its subcellular location is the cell projection. It localises to the cilium. The protein resides in the flagellum. The protein localises to the nucleus. In terms of biological role, inhibits the Wnt/Wingless pathway by binding to CTNNB1/beta-catenin and inhibiting beta-catenin-mediated transcriptional activation through competition with TCF/LEF transcription factors. Has also been shown to play a role in regulating the intracellular trafficking of polycystin-2/PKD2 and possibly of other intracellular proteins. Promotes adipocyte and cardiomyocyte differentiation. The polypeptide is Protein chibby homolog 1 (Cby1) (Mus musculus (Mouse)).